Reading from the N-terminus, the 424-residue chain is Imidazolonepropionase (424 aa).

Residues His84 and His86 each contribute to the Fe(3+) site. Zn(2+) is bound by residues His84 and His86. Residues Arg93, Tyr156, and His189 each coordinate 4-imidazolone-5-propanoate. Tyr156 contacts N-formimidoyl-L-glutamate. His254 serves as a coordination point for Fe(3+). His254 contacts Zn(2+). Glu257 is a 4-imidazolone-5-propanoate binding site. A Fe(3+)-binding site is contributed by Asp328. Residue Asp328 coordinates Zn(2+). Positions 330 and 332 each coordinate N-formimidoyl-L-glutamate. Ser333 contacts 4-imidazolone-5-propanoate.

This sequence belongs to the metallo-dependent hydrolases superfamily. HutI family. Requires Zn(2+) as cofactor. It depends on Fe(3+) as a cofactor.

It is found in the cytoplasm. The catalysed reaction is 4-imidazolone-5-propanoate + H2O = N-formimidoyl-L-glutamate. The protein operates within amino-acid degradation; L-histidine degradation into L-glutamate; N-formimidoyl-L-glutamate from L-histidine: step 3/3. Catalyzes the hydrolytic cleavage of the carbon-nitrogen bond in imidazolone-5-propanoate to yield N-formimidoyl-L-glutamate. It is the third step in the universal histidine degradation pathway. This Geobacillus kaustophilus (strain HTA426) protein is Imidazolonepropionase.